The primary structure comprises 239 residues: Probable 2-phosphosulfolactate phosphatase (239 aa).

Belongs to the ComB family. Mg(2+) serves as cofactor.

It catalyses the reaction (2R)-O-phospho-3-sulfolactate + H2O = (2R)-3-sulfolactate + phosphate. The sequence is that of Probable 2-phosphosulfolactate phosphatase from Clostridium botulinum (strain Langeland / NCTC 10281 / Type F).